The following is a 391-amino-acid chain: D-alanine--D-alanine ligase (391 aa).

Residues 1–24 (MSSENLPQSPERAESPQAPRRKPR) form a disordered region. The ATP-grasp domain maps to 171–381 (KRVFLSFGLP…YPELVDRLIQ (211 aa)). An ATP-binding site is contributed by 207-262 (AGEHGWPLFIKPARGGSSMGITKVDSVEGLDAAIEEARRHDPKFLVESLLRGREIE). Asp-335, Glu-348, and Asn-350 together coordinate Mg(2+).

It belongs to the D-alanine--D-alanine ligase family. Mg(2+) is required as a cofactor. The cofactor is Mn(2+).

The protein localises to the cytoplasm. The enzyme catalyses 2 D-alanine + ATP = D-alanyl-D-alanine + ADP + phosphate + H(+). It participates in cell wall biogenesis; peptidoglycan biosynthesis. Cell wall formation. The polypeptide is D-alanine--D-alanine ligase (Streptomyces griseus subsp. griseus (strain JCM 4626 / CBS 651.72 / NBRC 13350 / KCC S-0626 / ISP 5235)).